The sequence spans 109 residues: Spermidine export protein MdtI (109 aa).

4 helical membrane-spanning segments follow: residues W6 to L26, I36 to V56, A64 to F84, and L88 to L108.

Belongs to the drug/metabolite transporter (DMT) superfamily. Small multidrug resistance (SMR) (TC 2.A.7.1) family. MdtI subfamily. Forms a complex with MdtJ.

It localises to the cell inner membrane. In terms of biological role, catalyzes the excretion of spermidine. In Escherichia coli O139:H28 (strain E24377A / ETEC), this protein is Spermidine export protein MdtI.